A 319-amino-acid polypeptide reads, in one-letter code: Secreted effector protein sopD2 (319 aa).

The Required to target late endocytic compartments motif lies at 37–44 (WDRFKDCF).

The protein belongs to the SopD family.

It is found in the secreted. The protein localises to the host cell membrane. Functionally, effector proteins function to alter host cell physiology and promote bacterial survival in host tissues. Contributes to the formation of Salmonella-induced filaments (Sifs) in infected epithelial cells and to replication in macrophages. This is Secreted effector protein sopD2 (sopD2) from Salmonella typhimurium (strain LT2 / SGSC1412 / ATCC 700720).